Here is a 763-residue protein sequence, read N- to C-terminus: Long-chain-fatty-acid--CoA ligase ACSBG2 (763 aa).

Positions 47 to 78 (CSMKPADDPKTERSQMNKTGLASSSRPASNVW) are disordered. Residues 51–61 (PADDPKTERSQ) show a composition bias toward basic and acidic residues. Polar residues predominate over residues 62–78 (MNKTGLASSSRPASNVW). Residues 281 to 289 (TSGTTGQPK), 472 to 477 (ELYGMS), Asp-550, Arg-565, and Lys-678 each bind ATP.

This sequence belongs to the ATP-dependent AMP-binding enzyme family. Bubblegum subfamily.

It is found in the cytoplasm. The enzyme catalyses a long-chain fatty acid + ATP + CoA = a long-chain fatty acyl-CoA + AMP + diphosphate. The catalysed reaction is (5Z,8Z,11Z,14Z)-eicosatetraenoate + ATP + CoA = (5Z,8Z,11Z,14Z)-eicosatetraenoyl-CoA + AMP + diphosphate. It carries out the reaction hexadecanoate + ATP + CoA = hexadecanoyl-CoA + AMP + diphosphate. It catalyses the reaction (9Z)-octadecenoate + ATP + CoA = (9Z)-octadecenoyl-CoA + AMP + diphosphate. The enzyme catalyses (9Z,12Z)-octadecadienoate + ATP + CoA = (9Z,12Z)-octadecadienoyl-CoA + AMP + diphosphate. The catalysed reaction is tetracosanoate + ATP + CoA = tetracosanoyl-CoA + AMP + diphosphate. In terms of biological role, mediates activation of long-chain fatty acids for both synthesis of cellular lipids, and degradation via beta-oxidation. Functionally, catalyzes the conversion of fatty acids such as long chain and very long-chain fatty acids to their active form acyl-CoAs for both synthesis of cellular lipids, and degradation via beta-oxidation. Can activate diverse saturated, monosaturated and polyunsaturated fatty acids. This chain is Long-chain-fatty-acid--CoA ligase ACSBG2, found in Gallus gallus (Chicken).